A 604-amino-acid polypeptide reads, in one-letter code: Microtubule-associated protein 70-4 (604 aa).

Residues 1 to 33 (MEERGFMSPSLAISASYREGGSKGMSRRRSMRP) form a disordered region. Positions 49-351 (DPVRIELNRL…ADRAAKSEAQ (303 aa)) form a coiled coil. The interval 233-470 (IIDKMHRQKV…PLNHKSSEGT (238 aa)) is required for targeting to microtubules. Disordered regions lie at residues 367–422 (LKGP…RSLT) and 434–495 (GTSR…NDSV). The span at 371-385 (TSSSSRGTSVGRSSS) shows a compositional bias: low complexity. Composition is skewed to polar residues over residues 401–422 (PKIT…RSLT) and 468–478 (EGTSRGESPSS). A coiled-coil region spans residues 521 to 569 (LRDKDEAIEMLAKKVETLTKAMDVEAKKMRREVAVMGKEVAAMRVVDKG).

The protein belongs to the MAP70 family.

The protein localises to the cytoplasm. The protein resides in the cytoskeleton. Plant-specific protein that interact with microtubules. The sequence is that of Microtubule-associated protein 70-4 (MAP70.4) from Arabidopsis thaliana (Mouse-ear cress).